The primary structure comprises 197 residues: Phosphoheptose isomerase (197 aa).

One can recognise an SIS domain in the interval 41 to 197 (VVETFRRGGK…EIVERTLFEE (157 aa)). 56–58 (NGG) serves as a coordination point for substrate. Zn(2+) contacts are provided by His-65 and Glu-69. Substrate is bound by residues Glu-69, 98 to 99 (ND), 124 to 126 (STS), Ser-129, and Gln-176. Gln-176 and His-184 together coordinate Zn(2+).

Belongs to the SIS family. GmhA subfamily. Zn(2+) serves as cofactor.

It is found in the cytoplasm. The enzyme catalyses 2 D-sedoheptulose 7-phosphate = D-glycero-alpha-D-manno-heptose 7-phosphate + D-glycero-beta-D-manno-heptose 7-phosphate. The protein operates within carbohydrate biosynthesis; D-glycero-D-manno-heptose 7-phosphate biosynthesis; D-glycero-alpha-D-manno-heptose 7-phosphate and D-glycero-beta-D-manno-heptose 7-phosphate from sedoheptulose 7-phosphate: step 1/1. In terms of biological role, catalyzes the isomerization of sedoheptulose 7-phosphate in D-glycero-D-manno-heptose 7-phosphate. The protein is Phosphoheptose isomerase of Roseiflexus sp. (strain RS-1).